Here is a 260-residue protein sequence, read N- to C-terminus: Zinc finger protein 575 (260 aa).

Positions 22–81 are disordered; it reads PGLGPGRWLLPGAHQPSCPPAPHQGPLQKPSQSAPGPTASASAPPRPRRRPPPQRPHRCP. Residues 51 to 64 are compositionally biased toward low complexity; it reads PSQSAPGPTASASA. A compositionally biased stretch (basic residues) spans 67 to 78; the sequence is RPRRRPPPQRPH. 6 C2H2-type zinc fingers span residues 78 to 100, 106 to 128, 134 to 156, 162 to 184, 192 to 214, and 228 to 255; these read HRCPDCDKAFSYPSKLATHRLAH, HPCPDCPKAFSYPSKLAAHRLTH, HPCPHCPKAFGHRSKLAAHLWTH, YPCPDCPKSFCYPSKLAAHRHTH, YPCPHCPKAFSFPSKLAAHRLCH, and HRCSSCGQAFGQRRLLLLHQRSHHQVEH.

Belongs to the krueppel C2H2-type zinc-finger protein family.

It is found in the nucleus. Its function is as follows. May be involved in transcriptional regulation. In Macaca fascicularis (Crab-eating macaque), this protein is Zinc finger protein 575 (ZNF575).